A 151-amino-acid polypeptide reads, in one-letter code: Protein Smg homolog (151 aa).

It belongs to the Smg family.

The protein is Protein Smg homolog of Laribacter hongkongensis (strain HLHK9).